The sequence spans 373 residues: Chaperone protein DnaJ (373 aa).

The 65-residue stretch at 4-68 folds into the J domain; it reads DYYEILGLTK…VKREQYNQFG (65 aa). Residues 142-224 form a CR-type zinc finger; the sequence is GKEIVEPLEK…CKGKTHTKTT (83 aa). The Zn(2+) site is built by cysteine 155, cysteine 158, cysteine 172, cysteine 175, cysteine 198, cysteine 201, cysteine 212, and cysteine 215. 4 CXXCXGXG motif repeats span residues 155-162, 172-179, 198-205, and 212-219; these read CNTCNGSG, CTQCSGMG, CSKCNGIG, and CLICKGKT.

This sequence belongs to the DnaJ family. As to quaternary structure, homodimer. The cofactor is Zn(2+).

It is found in the cytoplasm. Its function is as follows. Participates actively in the response to hyperosmotic and heat shock by preventing the aggregation of stress-denatured proteins and by disaggregating proteins, also in an autonomous, DnaK-independent fashion. Unfolded proteins bind initially to DnaJ; upon interaction with the DnaJ-bound protein, DnaK hydrolyzes its bound ATP, resulting in the formation of a stable complex. GrpE releases ADP from DnaK; ATP binding to DnaK triggers the release of the substrate protein, thus completing the reaction cycle. Several rounds of ATP-dependent interactions between DnaJ, DnaK and GrpE are required for fully efficient folding. Also involved, together with DnaK and GrpE, in the DNA replication of plasmids through activation of initiation proteins. This is Chaperone protein DnaJ from Mycoplasma mobile (strain ATCC 43663 / 163K / NCTC 11711) (Mesomycoplasma mobile).